Here is a 103-residue protein sequence, read N- to C-terminus: Co-chaperonin GroES (103 aa).

Belongs to the GroES chaperonin family. Heptamer of 7 subunits arranged in a ring. Interacts with the chaperonin GroEL.

The protein resides in the cytoplasm. Together with the chaperonin GroEL, plays an essential role in assisting protein folding. The GroEL-GroES system forms a nano-cage that allows encapsulation of the non-native substrate proteins and provides a physical environment optimized to promote and accelerate protein folding. GroES binds to the apical surface of the GroEL ring, thereby capping the opening of the GroEL channel. This chain is Co-chaperonin GroES, found in Crocosphaera subtropica (strain ATCC 51142 / BH68) (Cyanothece sp. (strain ATCC 51142)).